The following is a 414-amino-acid chain: Glutamyl-tRNA reductase (414 aa).

Substrate contacts are provided by residues 49-52, S108, 113-115, and Q119; these read TCNR and EPQ. Residue C50 is the Nucleophile of the active site. NADP(+) is bound at residue 188–193; that stretch reads GAGQTG.

Belongs to the glutamyl-tRNA reductase family. As to quaternary structure, homodimer.

The enzyme catalyses (S)-4-amino-5-oxopentanoate + tRNA(Glu) + NADP(+) = L-glutamyl-tRNA(Glu) + NADPH + H(+). It participates in porphyrin-containing compound metabolism; protoporphyrin-IX biosynthesis; 5-aminolevulinate from L-glutamyl-tRNA(Glu): step 1/2. Its function is as follows. Catalyzes the NADPH-dependent reduction of glutamyl-tRNA(Glu) to glutamate 1-semialdehyde (GSA). This Francisella tularensis subsp. holarctica (strain LVS) protein is Glutamyl-tRNA reductase.